We begin with the raw amino-acid sequence, 338 residues long: MIRVAINGYGRIGRSVLRALYESGKRGQMQLVAINELAKPEAIVHLTNYDTTHGRFHTRASLDEGMMHLGNDAIRLLAIEDAAALPWQALDVDLVFECTGALNDRQSAEAHITAGARKVLISHPSSADVDATIVYGVNDASLKATDTVVSNASCTTNCLVPVIDVLDRHFGVKSGAITTIHSAMNDQQVIDAYHDDLRRTRAASQSIIPVDTKLARGIERILPQMKDKFEAISVRVPTINVTAIDLSVTLDTRVDIATVNAALKAAADGSASGILGYTDEPLVSCDFNHDPRSSVVDGTQTRVSAGHLVKMLLWCDNEWGFANRMLDTALAMAATQAE.

Arg11–Ile12 contributes to the NAD(+) binding site. Substrate contacts are provided by residues Ser153 to Thr155, Arg199, Thr212 to Lys213, and Arg235. Cys154 functions as the Nucleophile in the catalytic mechanism. Position 317 (Asn317) interacts with NAD(+).

Belongs to the glyceraldehyde-3-phosphate dehydrogenase family. Epd subfamily. Homotetramer.

Its subcellular location is the cytoplasm. It carries out the reaction D-erythrose 4-phosphate + NAD(+) + H2O = 4-phospho-D-erythronate + NADH + 2 H(+). It functions in the pathway cofactor biosynthesis; pyridoxine 5'-phosphate biosynthesis; pyridoxine 5'-phosphate from D-erythrose 4-phosphate: step 1/5. In terms of biological role, catalyzes the NAD-dependent conversion of D-erythrose 4-phosphate to 4-phosphoerythronate. This is D-erythrose-4-phosphate dehydrogenase from Shewanella amazonensis (strain ATCC BAA-1098 / SB2B).